Here is a 61-residue protein sequence, read N- to C-terminus: Large ribosomal subunit protein bL32 (61 aa).

A compositionally biased stretch (basic residues) spans 1–16 (MAVPKKKTSKSRKNMR). Residues 1–20 (MAVPKKKTSKSRKNMRRAHD) are disordered.

The protein belongs to the bacterial ribosomal protein bL32 family.

This Trichlorobacter lovleyi (strain ATCC BAA-1151 / DSM 17278 / SZ) (Geobacter lovleyi) protein is Large ribosomal subunit protein bL32.